The primary structure comprises 428 residues: Protein clpf-1 (428 aa).

Residues Glu16 and Arg56 each coordinate ATP. Residues 99-118 are disordered; that stretch reads KKREEQAVSNSSKPKGPRLL. ATP is bound at residue 124–129; the sequence is DVGKTT.

It belongs to the Clp1 family. Clp1 subfamily.

It is found in the nucleus. Functionally, required for endonucleolytic cleavage during polyadenylation-dependent pre-mRNA 3'-end formation. The chain is Protein clpf-1 from Caenorhabditis briggsae.